We begin with the raw amino-acid sequence, 665 residues long: BTB/POZ domain-containing protein At1g30440 (665 aa).

One can recognise a BTB domain in the interval 28-98 (SDIVVEVGEM…CYGVKLELTA (71 aa)). The NPH3 domain maps to 214–508 (DWWYEDASML…VQVLFFEQLQ (295 aa)). The tract at residues 260 to 280 (LKRRRGGPESSGRFSTPLGSG) is disordered. Positions 271–280 (GRFSTPLGSG) are enriched in polar residues. Position 279 is a phosphoserine (Ser-279). Positions 281 to 306 (NVLSEEEQKNLLEEIQELLRMQKGLV) form a coiled coil. Tyr-449 is subject to Phosphotyrosine. A compositionally biased stretch (polar residues) spans 626–639 (SAQEGSVSKSNNEN). The tract at residues 626–665 (SAQEGSVSKSNNENVKIEKLKDVKERRGKHKKASSISSER) is disordered. Positions 640–650 (VKIEKLKDVKE) are enriched in basic and acidic residues.

The protein belongs to the NPH3 family.

It functions in the pathway protein modification; protein ubiquitination. In terms of biological role, may act as a substrate-specific adapter of an E3 ubiquitin-protein ligase complex (CUL3-RBX1-BTB) which mediates the ubiquitination and subsequent proteasomal degradation of target proteins. This is BTB/POZ domain-containing protein At1g30440 from Arabidopsis thaliana (Mouse-ear cress).